The sequence spans 349 residues: MHQSLTQQRSSDMSLPDSMGAFNRRKRNSIYVTVTLLIVSVLILTVGLAATTRTQNVTVGGYYPGVILGFGSFLGIIGSNLIENKRQMLVASIVFISFGVIAAFCCAIVDGVFAARHIDLKPLYANRCHYVPKTSQKEAEEVISSSTKNSPSTRVMRNLTQAAREVNCPHLSREFCTPRIRGNTCFCCDLYNCGNRVEITGGYYEYIDVSSCQDIIHLYHLLWSATILNIVGLFLGIITAAVLGGFKDMNPTLPAMNCSVENTHPTVSYYAHPQVTSYNTYYHSPPHLPPYSAYDFQHSSVFPSSPPSGLSDEPQSASPSPSYMWSSSAPPRYSPPYYPPFEKPPPYSP.

4 helical membrane passes run 30-50, 57-77, 89-109, and 226-246; these read IYVTVTLLIVSVLILTVGLAA, VTVGGYYPGVILGFGSFLGII, LVASIVFISFGVIAAFCCAIV, and TILNIVGLFLGIITAAVLGGF. The segment at 301-329 is disordered; it reads VFPSSPPSGLSDEPQSASPSPSYMWSSSA. The segment covering 316–329 has biased composition (low complexity); that stretch reads SASPSPSYMWSSSA.

This sequence belongs to the TMEM255 family.

It localises to the membrane. The polypeptide is Transmembrane protein 255A (TMEM255A) (Macaca fascicularis (Crab-eating macaque)).